We begin with the raw amino-acid sequence, 425 residues long: Serine--tRNA ligase (425 aa).

Threonine 230 to glutamate 232 lines the L-serine pocket. Arginine 261–glutamate 263 serves as a coordination point for ATP. Glutamate 284 is a binding site for L-serine. ATP is bound at residue glutamate 348–serine 351. Residue serine 384 participates in L-serine binding.

The protein belongs to the class-II aminoacyl-tRNA synthetase family. Type-1 seryl-tRNA synthetase subfamily. In terms of assembly, homodimer. The tRNA molecule binds across the dimer.

The protein localises to the cytoplasm. The enzyme catalyses tRNA(Ser) + L-serine + ATP = L-seryl-tRNA(Ser) + AMP + diphosphate + H(+). The catalysed reaction is tRNA(Sec) + L-serine + ATP = L-seryl-tRNA(Sec) + AMP + diphosphate + H(+). It participates in aminoacyl-tRNA biosynthesis; selenocysteinyl-tRNA(Sec) biosynthesis; L-seryl-tRNA(Sec) from L-serine and tRNA(Sec): step 1/1. Its function is as follows. Catalyzes the attachment of serine to tRNA(Ser). Is also able to aminoacylate tRNA(Sec) with serine, to form the misacylated tRNA L-seryl-tRNA(Sec), which will be further converted into selenocysteinyl-tRNA(Sec). The sequence is that of Serine--tRNA ligase from Streptococcus equi subsp. equi (strain 4047).